Here is a 358-residue protein sequence, read N- to C-terminus: DNA replication and repair protein RecF (358 aa).

30-37 contributes to the ATP binding site; that stretch reads GNNGSGKT.

This sequence belongs to the RecF family.

The protein resides in the cytoplasm. The RecF protein is involved in DNA metabolism; it is required for DNA replication and normal SOS inducibility. RecF binds preferentially to single-stranded, linear DNA. It also seems to bind ATP. The polypeptide is DNA replication and repair protein RecF (Histophilus somni (strain 129Pt) (Haemophilus somnus)).